The chain runs to 341 residues: L-threonine 3-dehydrogenase (341 aa).

Cys-38 lines the Zn(2+) pocket. Active-site charge relay system residues include Thr-40 and His-43. Zn(2+)-binding residues include His-63, Glu-64, Cys-93, Cys-96, Cys-99, and Cys-107. Residues Ile-175, Asp-195, Arg-200, 262-264 (LGI), and 286-287 (IY) contribute to the NAD(+) site.

The protein belongs to the zinc-containing alcohol dehydrogenase family. In terms of assembly, homotetramer. It depends on Zn(2+) as a cofactor.

Its subcellular location is the cytoplasm. It carries out the reaction L-threonine + NAD(+) = (2S)-2-amino-3-oxobutanoate + NADH + H(+). It functions in the pathway amino-acid degradation; L-threonine degradation via oxydo-reductase pathway; glycine from L-threonine: step 1/2. Its function is as follows. Catalyzes the NAD(+)-dependent oxidation of L-threonine to 2-amino-3-ketobutyrate. This chain is L-threonine 3-dehydrogenase, found in Shewanella sediminis (strain HAW-EB3).